Consider the following 143-residue polypeptide: Small ribosomal subunit protein eS19x (143 aa).

The protein belongs to the eukaryotic ribosomal protein eS19 family.

The polypeptide is Small ribosomal subunit protein eS19x (RPS19C) (Arabidopsis thaliana (Mouse-ear cress)).